We begin with the raw amino-acid sequence, 436 residues long: 3-ketoacyl-CoA thiolase (436 aa).

Cys99 serves as the catalytic Acyl-thioester intermediate. Catalysis depends on proton acceptor residues His392 and Cys422.

It belongs to the thiolase-like superfamily. Thiolase family. Heterotetramer of two alpha chains (FadJ) and two beta chains (FadI).

It is found in the cytoplasm. It catalyses the reaction an acyl-CoA + acetyl-CoA = a 3-oxoacyl-CoA + CoA. It participates in lipid metabolism; fatty acid beta-oxidation. Functionally, catalyzes the final step of fatty acid oxidation in which acetyl-CoA is released and the CoA ester of a fatty acid two carbons shorter is formed. This chain is 3-ketoacyl-CoA thiolase, found in Klebsiella pneumoniae (strain 342).